We begin with the raw amino-acid sequence, 81 residues long: Insulin (81 aa).

3 cysteine pairs are disulfide-bonded: cysteine 7–cysteine 67, cysteine 19–cysteine 80, and cysteine 66–cysteine 71. The propeptide at 33–58 (DVEQPLVNGPLHGEVGELPFQHEEYQ) is c peptide.

It belongs to the insulin family. In terms of assembly, heterodimer of a B chain and an A chain linked by two disulfide bonds.

It localises to the secreted. In terms of biological role, insulin decreases blood glucose concentration. It increases cell permeability to monosaccharides, amino acids and fatty acids. It accelerates glycolysis, the pentose phosphate cycle, and glycogen synthesis in liver. The sequence is that of Insulin (INS) from Anas platyrhynchos (Mallard).